The sequence spans 214 residues: MNILRIACRSFHCLRCGPLLNENRGWSSKKIIKLVNKSSLSNKEFTEKVRDGTKDIPEWKKQKMAVRKKLQGQRWNPPKKISQEQMEALRLLKFNFPELTASDLADRFKISPEAVRRILKSNWKRTDEENNNTYERWKRRGERIKEMYQRKEDADFVSNQIVTSRKIILGSNSNSPELIARNVRTFKPFKPNNSTPEKKNTNKLYILKHLGSKQ.

A mitochondrion-targeting transit peptide spans 1–18; the sequence is MNILRIACRSFHCLRCGP.

This sequence belongs to the RRG9 family.

The protein resides in the mitochondrion. Functionally, required for respiratory activity and maintenance and expression of the mitochondrial genome. The chain is Required for respiratory growth protein 9, mitochondrial (RRG9) from Saccharomyces cerevisiae (strain RM11-1a) (Baker's yeast).